Here is an 803-residue protein sequence, read N- to C-terminus: MITLTELKCLADAQSSYHILKPWWDVFWYYITLIMLLVAVLAGALQLTQSRVLCCLPCKVEFDNHCAVPWDILKASMNTSSNPGTPLPLPLRIQNDLHRQQYSYIDAVCYEKQLHWFAKFFPYLVLLHTLIFAACSNFWLHYPSTSSRLEHFVAILHKCFDSPWTTRALSETVAEQSVRPLKLSKSKILLSSSGCSADIDSGKQSLPYPQPGLESAGIESPTSSVLDKKEGEQAKAIFEKVKRFRMHVEQKDIIYRVYLKQIIVKVILFVLIITYVPYFLTHITLEIDCSVDVQAFTGYKRYQCVYSLAEIFKVLASFYVILVILYGLTSSYSLWWMLRSSLKQYSFEALREKSNYSDIPDVKNDFAFILHLADQYDPLYSKRFSIFLSEVSENKLKQINLNNEWTVEKLKSKLVKNAQDKIELHLFMLNGLPDNVFELTEMEVLSLELIPEVKLPSAVSQLVNLKELRVYHSSLVVDHPALAFLEENLKILRLKFTEMGKIPRWVFHLKNLKELYLSGCVLPEQLSTMQLEGFQDLKNLRTLYLKSSLSRIPQVVTDLLPSLQKLSLDNEGSKLVVLNNLKKMVNLKSLELISCDLERIPHSIFSLNNLHELDLRENNLKTVEEIISFQHLQNLSCLKLWHNNIAYIPAQIGALSNLEQLSLDHNNIENLPLQLFLCTKLHYLDLSYNHLTFIPEEIQYLSNLQYFAVTNNNIEMLPDGLFQCKKLQCLLLGKNSLMNLSPHVGELSNLTHLELIGNYLETLPPELEGCQSLKRNCLIVEENLLNTLPLPVTERLQTCLDKC.

Topologically, residues 1 to 25 (MITLTELKCLADAQSSYHILKPWWD) are cytoplasmic. A helical membrane pass occupies residues 26 to 46 (VFWYYITLIMLLVAVLAGALQ). At 47 to 119 (LTQSRVLCCL…YEKQLHWFAK (73 aa)) the chain is on the extracellular side. Disulfide bonds link Cys55-Cys304 and Cys109-Cys289. Asn78 is a glycosylation site (N-linked (GlcNAc...) asparagine). A helical transmembrane segment spans residues 120-140 (FFPYLVLLHTLIFAACSNFWL). The Cytoplasmic segment spans residues 141–261 (HYPSTSSRLE…DIIYRVYLKQ (121 aa)). 2 positions are modified to phosphoserine: Ser186 and Ser196. A helical membrane pass occupies residues 262-282 (IIVKVILFVLIITYVPYFLTH). The Extracellular portion of the chain corresponds to 283–307 (ITLEIDCSVDVQAFTGYKRYQCVYS). A helical transmembrane segment spans residues 308–328 (LAEIFKVLASFYVILVILYGL). Residues 329–803 (TSSYSLWWML…ERLQTCLDKC (475 aa)) are Cytoplasmic-facing. LRR repeat units lie at residues 464–486 (NLKELRVYHSSLVVDHPALAFLE), 488–509 (NLKILRLKFTEMGKIPRWVFHL), 511–532 (NLKELYLSGCVLPEQLSTMQLE), 539–559 (NLRTLYLKSSLSRIPQVVTDL), 562–582 (SLQKLSLDNEGSKLVVLNNLK), 586–607 (NLKSLELISCDLERIPHSIFSL), 609–630 (NLHELDLRENNLKTVEEIISFQ), 634–655 (NLSCLKLWHNNIAYIPAQIGAL), 657–678 (NLEQLSLDHNNIENLPLQLFLC), 680–701 (KLHYLDLSYNHLTFIPEEIQYL), 703–724 (NLQYFAVTNNNIEMLPDGLFQC), 726–747 (KLQCLLLGKNSLMNLSPHVGEL), and 749–771 (NLTHLELIGNYLETLPPELEGCQ).

The protein belongs to the LRRC8 family. Heterohexamer; oligomerizes with other LRRC8 proteins (LRRC8A, LRRC8C, LRRC8D and/or LRRC8E) to form a heterohexamer. In vivo, the subunit composition may depend primarily on expression levels, and heterooligomeric channels containing various proportions of the different LRRC8 proteins may coexist.

The protein localises to the cell membrane. Its subcellular location is the endoplasmic reticulum membrane. It catalyses the reaction chloride(in) = chloride(out). It carries out the reaction iodide(out) = iodide(in). The enzyme catalyses taurine(out) = taurine(in). In terms of biological role, non-essential component of the volume-regulated anion channel (VRAC, also named VSOAC channel), an anion channel required to maintain a constant cell volume in response to extracellular or intracellular osmotic changes. The VRAC channel conducts iodide better than chloride and can also conduct organic osmolytes like taurine. Channel activity requires LRRC8A plus at least one other family member (LRRC8B, LRRC8C, LRRC8D or LRRC8E); channel characteristics depend on the precise subunit composition. This Homo sapiens (Human) protein is Volume-regulated anion channel subunit LRRC8B.